The sequence spans 474 residues: Alkylcitrate dehydratase phiI (474 aa).

Belongs to the PrpD family. In terms of assembly, monomer.

It carries out the reaction (4E,11E)-2-hydroxytrideca-4,11-dien-1,2,3-tricarboxylate + 2 H(+) = [4-(deca-1,8-diyl)-2,5-dioxo-2,5-dihydro-3-furanyl]acetate + 2 H2O. The protein operates within secondary metabolite biosynthesis. Functionally, alkylcitrate dehydratasee; part of the gene cluster that mediates the biosynthesis of the antihypercholesterolemic agents phomoidrides which are dimeric anhydrides. Within the pathway, the alkylcitrate synthase (ACS) tstiJ and the alkylcitrate dehydratase (ACDH) tstI produce the decarboxylated monomeric anhydrides by coupling the C12-fatty acyl product from phiA with oxalacetic acid. The pathway begins with the highly reducing polyketide synthase tstA that catalyzes the formation of a C12-fatty acyl-ACP, starting from one acetate and 5 malonate units. The hydrolase tstM is involved in the release of the C12-fatty acyl chain from phiA. The alkylcitrate synthase (ACS) tstJ and the alkylcitrate dehydratase (ACDH) tstI then give rise to decarboxylated monomeric anhydrides by coupling the C12-fatty acyl chain with oxalacetic acid. The cyclase tstC is responsible for the dimerization of the monomeric anhydrides which leads to the production of prephomoidride that contains the characteristic bicyclo[4.3.1]deca-1,6-diene system of phomoidrides. Iterative oxidation catalyzed by the alpha-ketoglutarate-dependent dioxygenase tstK produced then phomoidride A. Finally, the methyltransferase tstE converts phomoidride A to phomoidride B via an acetalization reaction. The phosphatidylethanolamine-binding protein tstB and tstN are not essential for dimerization and their functions have still to be determined. This Talaromyces stipitatus (strain ATCC 10500 / CBS 375.48 / QM 6759 / NRRL 1006) (Penicillium stipitatum) protein is Alkylcitrate dehydratase phiI.